The chain runs to 213 residues: Phosphatidylethanolamine N-methyltransferase A (213 aa).

The Lumenal segment spans residues 1–21; sequence MIVEHAIDYIDYLMNYVDFTE. Positions 22–42 form an intramembrane region, helical; sequence KYFLLTIACVVFNPTWWNITA. Residues 43–54 lie on the Lumenal side of the membrane; that stretch reads RMEYKTKFMTKI. The chain crosses the membrane as a helical span at residues 55-75; it reads CGSKENGCYLLAFLIFSLGIL. Over 76 to 102 the chain is Cytoplasmic; it reads RDWLFSEALIRQPIFQEFDRFEVEVLS. The helical transmembrane segment at 103–123 threads the bilayer; it reads YILYGFGGILVLAAYLKLGIT. 107-109 contributes to the S-adenosyl-L-methionine binding site; sequence GFG. The Lumenal segment spans residues 124–166; it reads GTYLGDYFGILMKERVTGFPFNVMNNPMYNGSVMLFIAHALSY. A helical membrane pass occupies residues 167 to 187; the sequence is KSVAGLVLSFVVYVVYKFALI. The Cytoplasmic segment spans residues 188 to 213; the sequence is FEESFTNYIYSTAAANAAKKNKSKSK. Residue 189–190 coordinates S-adenosyl-L-methionine; it reads EE.

It belongs to the class VI-like SAM-binding methyltransferase superfamily. PEMT/PEM2 methyltransferase family.

It localises to the endoplasmic reticulum membrane. The protein resides in the mitochondrion membrane. It carries out the reaction a 1,2-diacyl-sn-glycero-3-phospho-N-methylethanolamine + S-adenosyl-L-methionine = a 1,2-diacyl-sn-glycero-3-phospho-N,N-dimethylethanolamine + S-adenosyl-L-homocysteine + H(+). The catalysed reaction is a 1,2-diacyl-sn-glycero-3-phospho-N,N-dimethylethanolamine + S-adenosyl-L-methionine = a 1,2-diacyl-sn-glycero-3-phosphocholine + S-adenosyl-L-homocysteine + H(+). The enzyme catalyses a 1,2-diacyl-sn-glycero-3-phosphoethanolamine + S-adenosyl-L-methionine = a 1,2-diacyl-sn-glycero-3-phospho-N-methylethanolamine + S-adenosyl-L-homocysteine + H(+). It functions in the pathway phospholipid metabolism; phosphatidylcholine biosynthesis. Its function is as follows. Catalyzes the three sequential steps of the methylation pathway of phosphatidylcholine biosynthesis, the SAM-dependent methylation of phosphatidylethanolamine (PE) to phosphatidylmonomethylethanolamine (PMME), PMME to phosphatidyldimethylethanolamine (PDME), and PDME to phosphatidylcholine (PC). The protein is Phosphatidylethanolamine N-methyltransferase A (pemtA) of Dictyostelium discoideum (Social amoeba).